A 445-amino-acid polypeptide reads, in one-letter code: Histone acetyltransferase ESA1 (445 aa).

Ser17 is subject to Phosphoserine. A Tudor-knot domain is found at 22-74 (IIKCQCWVQKNDEERLAEILSINTRKAPPKFYVHYVNYNKRLDEWITTDRINL). The interval 88-114 (EDNKKQKKKKATNTSETPQDSLQDGVD) is disordered. Residues 99 to 109 (TNTSETPQDSL) are compositionally biased toward polar residues. Residues 162–433 (ARVRNLNRII…IDPNRLIWKP (272 aa)) enclose the MYST-type HAT domain. The C2HC MYST-type; degenerate zinc-finger motif lies at 195–220 (IYIDDFTLQYFGSKKQYERYRKKCTL). An ESA1-RPD3 motif motif is present at residues 245–266 (RTWCRNLCLLSKLFLDHKTLYY). The residue at position 262 (Lys262) is an N6-acetyllysine; by autocatalysis. Acetyl-CoA contacts are provided by residues 303–307 (ACILT) and 312–318 (QRMGYGK). The Proton donor/acceptor role is filled by Glu338. Ser342 lines the acetyl-CoA pocket.

The protein belongs to the MYST (SAS/MOZ) family. Component of the NuA4 histone acetyltransferase complex composed of at least ACT1, ARP4, EAF3, EAF5, EAF6, EAF7, EPL1, ESA1, SWC4, TRA1, VID21, YAF9 and YNG2. The complex interacts with histones H4 (HHF1 and HHF2), H3 (HHT1 and HHT2) and H2A (HTA1 and HTA2). In terms of processing, autoacetylation at Lys-262 is required for proper function.

It catalyses the reaction L-lysyl-[histone] + acetyl-CoA = N(6)-acetyl-L-lysyl-[histone] + CoA + H(+). The catalysed reaction is L-lysyl-[protein] + acetyl-CoA = N(6)-acetyl-L-lysyl-[protein] + CoA + H(+). The enzyme catalyses 2-hydroxyisobutanoyl-CoA + L-lysyl-[protein] = N(6)-(2-hydroxyisobutanoyl)-L-lysyl-[protein] + CoA + H(+). It carries out the reaction (2E)-butenoyl-CoA + L-lysyl-[protein] = N(6)-(2E)-butenoyl-L-lysyl-[protein] + CoA + H(+). Catalytic component of the NuA4 histone acetyltransferase (HAT), a multiprotein complex involved in epigenetic transcriptional activation of selected genes principally by acetylation of nucleosomal histones H4, H3, H2B, H2A and H2A variant H2A.Z. Acetylates histone H4 to form H4K5ac, H4K8ac, H4K12ac and H4K16ac, histone H3 to form H3K14ac, histone H2B to form H2BK16ac, histone H2A to form H2AK4ac and H2AK7ac, and histone variant H2A.Z to form H2A.ZK14ac. Acetylation of histones gives a specific tag for epigenetic transcription initiation and elongation. Acetylation of histone H4 is essential for DNA double-strand break repair through homologous recombination. Involved in cell cycle progression. Recruitment to promoters depends on H3K4me. Also acetylates non-histone proteins, such as ATG3 and PAH1. Regulates autophagy by acetylating ATG3, controlling interaction the interaction between ATG3 and ATG8 and ATG8 lipidation. Acts as a regulator of fatty-acid-induced triacylglycerol synthesis by catalyzing acetylation of PAH1, thereby promoting the synthesis of diacylglycerol. In addition to protein acetyltransferase, can use different acyl-CoA substrates, such as 2-hydroxyisobutanoyl-CoA (2-hydroxyisobutyryl-CoA) or (2E)-butenoyl-CoA (crotonyl-CoA), and is able to mediate protein 2-hydroxyisobutyrylation and crotonylation, respectively. Catalyzes histone crotonylation. This chain is Histone acetyltransferase ESA1, found in Saccharomyces cerevisiae (strain ATCC 204508 / S288c) (Baker's yeast).